A 630-amino-acid polypeptide reads, in one-letter code: Mesothelin (630 aa).

Residues 1 to 36 form the signal peptide; that stretch reads MALPTARPLLGSCGTPALGSLLFLLFSLGWVQPSRT. An N-linked (GlcNAc...) asparagine glycan is attached at asparagine 57. Residue serine 200 is modified to Phosphoserine; by FAM20C. The required for megakaryocyte-potentiating factor activity stretch occupies residues 262–286; that stretch reads SIPQGIVAAWRQRSSRDPSWRQPER. A disulfide bridge connects residues cysteine 302 and cysteine 326. 3 N-linked (GlcNAc...) asparagine glycosylation sites follow: asparagine 388, asparagine 496, and asparagine 523. Residue serine 606 is the site of GPI-anchor amidated serine attachment. A propeptide spans 607 to 630 (removed in mature form); sequence GTPCLLGPGPVLTVLALLLASTLA.

It belongs to the mesothelin family. Interacts with MUC16. Both MPF and the cleaved form of mesothelin are N-glycosylated. In terms of processing, proteolytically cleaved by a furin-like convertase to generate megakaryocyte-potentiating factor (MPF), and the cleaved form of mesothelin. Expressed in lung. Expressed at low levels in heart, placenta and kidney. Expressed in mesothelial cells. Highly expressed in mesotheliomas, ovarian cancers, and some squamous cell carcinomas (at protein level).

The protein localises to the cell membrane. It localises to the golgi apparatus. The protein resides in the secreted. Membrane-anchored forms may play a role in cellular adhesion. In terms of biological role, megakaryocyte-potentiating factor (MPF) potentiates megakaryocyte colony formation in vitro. In Homo sapiens (Human), this protein is Mesothelin (MSLN).